A 632-amino-acid chain; its full sequence is Golgin subfamily A member 8J (632 aa).

The disordered stretch occupies residues 1–76 (MAEETQHNKL…TSSATLKDLE (76 aa)). Coiled-coil stretches lie at residues 86-154 (LDSR…HMKR) and 220-421 (LKVQ…SLMA). Basic and acidic residues-rich tracts occupy residues 352–362 (KQEERIQEQHK) and 427–440 (HGGE…EEAP). Disordered stretches follow at residues 352-377 (KQEE…FKEP), 423-452 (PGEG…DPES), and 496-524 (LSEP…DEGE). The span at 508-520 (LGGGHHQAGAQGG) shows a compositional bias: gly residues.

The protein belongs to the GOLGA8 family.

The polypeptide is Golgin subfamily A member 8J (GOLGA8J) (Homo sapiens (Human)).